A 442-amino-acid polypeptide reads, in one-letter code: MPKIFRSLYVQVLIAIVLGILVGFLFPSFGEGLKPLGDGFIKLIKMLIAPIIFATVVSGIAHMRDTKKVGRVGGKALIYFEVVTTFALVIGLVVANILKPGHGMNVNPATLDTSAISKYTQAAGEQSVADFLLHIIPNTLVSAFTEGDLLQVLLISVLFGFALTQLGTLGQKVLAGIEAVNSAVFVILGFVMRLAPIGAFGAMAFTIGKYGVGTLAQLAYLMVAFYATCLLFVFVVLGLIARFAGFSILKFIRFIKEELLLVLGTSSSESALPRLITKLEYAGANRSVVGLVVPAGYSFNLDGTSIYLTMATLFIAQATNTHLSLGQQLGILGVLLLTSKGAAGVTGSGFITLAATLSAVGHVPVAGLALILGIDRFMSEARALTNFVGNGVATLVIARSEKALDTNRLQRVLNGEVLPPATPEVAAEERGEGRGLDGPLPA.

The next 8 membrane-spanning stretches (helical) occupy residues 10 to 30 (VQVL…PSFG), 40 to 60 (FIKL…VSGI), 77 to 97 (LIYF…VANI), 149 to 169 (LLQV…LGTL), 185 to 205 (FVIL…AMAF), 221 to 241 (LMVA…GLIA), 288 to 308 (VVGL…SIYL), and 354 to 374 (AATL…ILGI). The segment at 420–442 (PATPEVAAEERGEGRGLDGPLPA) is disordered.

This sequence belongs to the dicarboxylate/amino acid:cation symporter (DAACS) (TC 2.A.23) family.

It is found in the cell membrane. Functionally, responsible for the transport of dicarboxylates such as succinate, fumarate, and malate across the membrane. This chain is C4-dicarboxylate transport protein, found in Deinococcus geothermalis (strain DSM 11300 / CIP 105573 / AG-3a).